Here is a 175-residue protein sequence, read N- to C-terminus: MPITRAEKEAIIQELKEKFKEARVAVLADYRGLNVAEATRLRRRLREAGCEFKVAKNTLTGLAARQAGLEGLDPYLEGPIAIAFGVDPVAPAKVLSDFIRETRKMEIKAGVLEGTIIDARRVRDLADLPPREVLLARVLGGMQAPLYGFAGALQGTLRKFIYALEAIRKQKAGEA.

This sequence belongs to the universal ribosomal protein uL10 family. Part of the ribosomal stalk of the 50S ribosomal subunit. The N-terminus interacts with L11 and the large rRNA to form the base of the stalk. The C-terminus forms an elongated spine to which L12 dimers bind in a sequential fashion forming a multimeric L10(L12)X complex.

Forms part of the ribosomal stalk, playing a central role in the interaction of the ribosome with GTP-bound translation factors. The protein is Large ribosomal subunit protein uL10 of Pelotomaculum thermopropionicum (strain DSM 13744 / JCM 10971 / SI).